The chain runs to 372 residues: MNLEEENTIFKPLYSLKHSPINAYFSKNSDDFVVRERPLYEFSGKGEHLILHINKKDLTTNEALKILSEASGVKIRDFGYAGLKDKQGSTFQYLSMPKKFESFLSNFSHPKLKILEIFTHENKLRIGHLKGNSFFIRLKKVLPSDALKLEQALMNLDKQGFANYFGYQRFGKFGDNYKEGLEILRGKKMKNVKMKEFLISAFQSELFNRYLSKRVELSHFANDFSEKELIQIYKISKEEAKELKKQEQFFKLLKGEVLGHYPFGKCFLCEDLSAELGRFKARDISAMGLLIGAKAYETGEGLALNLENEIFKDTLEFKAKMQGSRRFMWGYLEELKWRYDEEKAHFCIEFFLQKGSYATVVLEEILHKNLFE.

The Nucleophile role is filled by aspartate 85. The 171-residue stretch at glycine 160–glycine 330 folds into the TRUD domain.

Belongs to the pseudouridine synthase TruD family.

The catalysed reaction is uridine(13) in tRNA = pseudouridine(13) in tRNA. Responsible for synthesis of pseudouridine from uracil-13 in transfer RNAs. This chain is tRNA pseudouridine synthase D, found in Campylobacter jejuni subsp. jejuni serotype O:2 (strain ATCC 700819 / NCTC 11168).